Here is a 325-residue protein sequence, read N- to C-terminus: Small ribosomal subunit protein uS3 (325 aa).

Positions 38 to 106 constitute a KH type-2 domain; the sequence is IRKMMSKGME…QVQLNILEVK (69 aa). A disordered region spans residues 217–325; that stretch reads EALLRQQRRE…AQGAPEKAEG (109 aa). The segment covering 222–232 has biased composition (basic residues); sequence QQRRERPRRGP. Low complexity predominate over residues 285–316; the sequence is TESAAVEGTPVETPAVTPETTAAPAAVTTAEA.

It belongs to the universal ribosomal protein uS3 family. As to quaternary structure, part of the 30S ribosomal subunit. Forms a tight complex with proteins S10 and S14.

Functionally, binds the lower part of the 30S subunit head. Binds mRNA in the 70S ribosome, positioning it for translation. The chain is Small ribosomal subunit protein uS3 from Parafrankia sp. (strain EAN1pec).